We begin with the raw amino-acid sequence, 705 residues long: MVRATPIHRYRNIGIMAHIDAGKTTTSERILFYAGVCHQMGEVHDGAAVMDWMEQEQERGITITSAATTVFWSGMDKSMPQHRFNIIDTPGHVDFTIEVERSLRVLDGAVFVLCAVGGVQPQSETVWRQANKYFVPRMAFVNKMDRTGANFDKVVEQLKARLGAYPVPMQVPIGAEDGFEGVIDLLKMKAIHWDAASQGTVFEYRDIPIELVDKASKARAFMVEAAAEATEELMDKYLNEGELKEQEILEGLRERTLKVEIIPVFCGSAFKNKGVQAMLDGVIHLLPSPADRPPVQGLDEKGNECRCKASDSEPFSALAFKIMTDPFVGSLTFFRVYSGVLNSGDQVYNSVKLKKERVGRILQMHSNQRDEIKEVRAGDIAAAVGLKDVTTGDTLCDQNHIIILERMIFPEPVISMAVEPKTKSDQEKMGMALGRLAQEDPSFRVKTDEESGQTIISGMGELHLDIIVDRMRREFNVEANVGKPQVAYRETIRKSDVKSDYKHVKQSGGKGQYGHVVIEISPMSDVDKQHPDVKGDFLFINEITGGVIPKEFISPIEKGLRETITSGPLAGFPVVGVKVKLVFGSYHDVDSSEMAFKLAASMAFKQGFAKANPVLLEPIMKVEIVSPEDYLGDIMGDVSRRRGILQGQDDSLSGKVINAMIPLGEMFGYATSLRSMTQGRATFAMEFDHYEEAPTNIADTVIKKT.

The tr-type G domain occupies His-8–Ala-290. GTP contacts are provided by residues Ala-17–Thr-24, Asp-88–His-92, and Asn-142–Asp-145.

The protein belongs to the TRAFAC class translation factor GTPase superfamily. Classic translation factor GTPase family. EF-G/EF-2 subfamily.

It is found in the cytoplasm. In terms of biological role, catalyzes the GTP-dependent ribosomal translocation step during translation elongation. During this step, the ribosome changes from the pre-translocational (PRE) to the post-translocational (POST) state as the newly formed A-site-bound peptidyl-tRNA and P-site-bound deacylated tRNA move to the P and E sites, respectively. Catalyzes the coordinated movement of the two tRNA molecules, the mRNA and conformational changes in the ribosome. The sequence is that of Elongation factor G from Xylella fastidiosa (strain M12).